The chain runs to 388 residues: Ribonucleoside-diphosphate reductase subunit beta (388 aa).

Fe cation contacts are provided by D84, E115, and H118. Y122 is a catalytic residue. The Fe cation site is built by E212, E247, and H250.

The protein belongs to the ribonucleoside diphosphate reductase small chain family. As to quaternary structure, heterodimer of a large and a small subunit. Fe cation serves as cofactor.

It catalyses the reaction a 2'-deoxyribonucleoside 5'-diphosphate + [thioredoxin]-disulfide + H2O = a ribonucleoside 5'-diphosphate + [thioredoxin]-dithiol. Provides the precursors necessary for DNA synthesis. Catalyzes the biosynthesis of deoxyribonucleotides from the corresponding ribonucleotides. The polypeptide is Ribonucleoside-diphosphate reductase subunit beta (NRDB) (Escherichia coli (Bacteriophage T4)).